The following is a 659-amino-acid chain: MTTKIFKRIIVFAVIALSSGNILAQSSSITRKDFDHINLEYSGLEKVNKAVAAGNYDDAAKALLAYYREKSKAREPDFSNAEKPADIRQPIDKVTREMADKALVHQFQPHKGYGYFDYGKDINWQMWPVKDNEVRWQLHRVKWWQAMALVYHATGDEKYAREWVYQYSDWARKNPLGLSQDNDKFVWRPLEVSDRVQSLPPTFSLFVNSPAFTPAFLMEFLNSYHQQADYLSTHYAEQGNHRLFEAQRNLFAGVSFPEFKDSPRWRQTGISVLNTEIKKQVYADGMQFELSPIYHVAAIDIFLKAYGSAKRVNLEKEFPQSYVQTVENMIMALISISLPDYNTPMFGDSWITDKNFRMAQFASWARVFPANQAIKYFATDGKQGKAPNFLSKALSNAGFYTFRSGWDKNATVMVLKASPPGEFHAQPDNGTFELFIKGRNFTPDAGVFVYSGDEAIMKLRNWYRQTRIHSTLTLDNQNMVITKARQNKWETGNNLDVLTYTNPSYPNLDHQRSVLFINKKYFLVIDRAIGEATGNLGVHWQLKEDSNPVFDKTKNRVYTTYRDGNNLMIQSLNADRTSLNEEEGKVSYVYNKELKRPAFVFEKPKKNAGTQNFVSIVYPYDGQKAPEISIRENKGNDFEKGKLNLTLTINGKQQLVLVP.

Residues 1–24 form the signal peptide; that stretch reads MTTKIFKRIIVFAVIALSSGNILA. Tyr-294 functions as the Proton acceptor in the catalytic mechanism.

This sequence belongs to the polysaccharide lyase 12 family.

The protein localises to the periplasm. It catalyses the reaction Elimination of sulfate, appears to act on linkages between N-acetyl-D-glucosamine and uronate. Product is an unsaturated sugar.. In terms of biological role, specifically cleaves heparan sulfate-rich regions of acidic polysaccharides. Does not act on N,O-desulfated glucosamine or N-acetyl-O-sulfated glucosamine linkages. Functions in cleaving metazoan heparan sulfate and providing carbon, nitrogen and sulfate sources for microorganisms. This Pedobacter heparinus (strain ATCC 13125 / DSM 2366 / CIP 104194 / JCM 7457 / NBRC 12017 / NCIMB 9290 / NRRL B-14731 / HIM 762-3) protein is Heparin-sulfate lyase (hepC).